The chain runs to 170 residues: CASP-like protein 1F1 (170 aa).

The Cytoplasmic segment spans residues 1–16; it reads MMGDNEGRRTPLLNLG. A helical transmembrane segment spans residues 17–37; sequence VQVSMRVLTIGAAMASMWVMI. Residues 38–62 lie on the Extracellular side of the membrane; that stretch reads TNREVASVYGIAFEAKYSYSSAFRY. Residues 63 to 83 traverse the membrane as a helical segment; it reads LVYAQIAVCAATLFTLVWACL. Residues 84–88 lie on the Cytoplasmic side of the membrane; the sequence is AVRRR. A helical membrane pass occupies residues 89 to 109; sequence GLVFALFFFDLLTTLTAISAF. Over 110–141 the chain is Extracellular; sequence SAAFAEGYVGKYGNKQAGWLPICGYVHGYCSR. Residues 142 to 162 form a helical membrane-spanning segment; it reads VTISLAMSFASFILLFILTVL. Residues 163–170 are Cytoplasmic-facing; sequence TASAARHY.

This sequence belongs to the Casparian strip membrane proteins (CASP) family. Homodimer and heterodimers. In flowers, expressed in the anther wall.

The protein resides in the cell membrane. In Arabidopsis thaliana (Mouse-ear cress), this protein is CASP-like protein 1F1.